A 173-amino-acid polypeptide reads, in one-letter code: CKLF-like MARVEL transmembrane domain-containing protein 8 (173 aa).

One can recognise an MARVEL domain in the interval 36 to 168 (FLRTPPGLLI…NTYFSFIAWR (133 aa)). A run of 4 helical transmembrane segments spans residues 41-61 (PGLL…LIAG), 70-90 (FGWV…FLIV), 105-125 (TTVG…AAIV), and 147-167 (FFAF…FIAW).

The protein belongs to the chemokine-like factor family.

It is found in the membrane. The protein is CKLF-like MARVEL transmembrane domain-containing protein 8 (Cmtm8) of Mus musculus (Mouse).